We begin with the raw amino-acid sequence, 61 residues long: MFQISNLLLAADFSSEVANNSAVGMIGSFIAAALLIVIPATAFLIFVSQKDSLNRTSTGRR.

A helical membrane pass occupies residues 26–46 (IGSFIAAALLIVIPATAFLIF).

It belongs to the PsbX family. Type 2 subfamily. As to quaternary structure, PSII consists of a core antenna complex that captures photons, and an electron transfer chain that converts photonic excitation into a charge separation. PSII forms dimeric complexes.

The protein localises to the cellular thylakoid membrane. Functionally, involved in the binding and/or turnover of quinones at the Q(B) site of Photosystem II. This chain is Photosystem II reaction center X protein, found in Prochlorococcus marinus (strain MIT 9312).